A 296-amino-acid polypeptide reads, in one-letter code: Light-independent protochlorophyllide reductase iron-sulfur ATP-binding protein (296 aa).

The segment at 1 to 20 (MTTTLSRPTDGEGSVQVQQD) is disordered. ATP contacts are provided by residues 39-44 (GIGKST) and Lys-68. Mg(2+) is bound at residue Ser-43. [4Fe-4S] cluster-binding residues include Cys-124 and Cys-158. Residue 209 to 210 (NR) coordinates ATP.

It belongs to the NifH/BchL/ChlL family. Homodimer. Protochlorophyllide reductase is composed of three subunits; ChlL, ChlN and ChlB. [4Fe-4S] cluster is required as a cofactor.

It carries out the reaction chlorophyllide a + oxidized 2[4Fe-4S]-[ferredoxin] + 2 ADP + 2 phosphate = protochlorophyllide a + reduced 2[4Fe-4S]-[ferredoxin] + 2 ATP + 2 H2O. It participates in porphyrin-containing compound metabolism; chlorophyll biosynthesis (light-independent). In terms of biological role, component of the dark-operative protochlorophyllide reductase (DPOR) that uses Mg-ATP and reduced ferredoxin to reduce ring D of protochlorophyllide (Pchlide) to form chlorophyllide a (Chlide). This reaction is light-independent. The L component serves as a unique electron donor to the NB-component of the complex, and binds Mg-ATP. In Synechococcus sp. (strain CC9902), this protein is Light-independent protochlorophyllide reductase iron-sulfur ATP-binding protein.